The primary structure comprises 234 residues: Biosynthetic peptidoglycan transglycosylase (234 aa).

A helical membrane pass occupies residues 11-31 (RFLLFAMLGFVGLSVLLVLVF).

The protein belongs to the glycosyltransferase 51 family.

The protein localises to the cell inner membrane. It catalyses the reaction [GlcNAc-(1-&gt;4)-Mur2Ac(oyl-L-Ala-gamma-D-Glu-L-Lys-D-Ala-D-Ala)](n)-di-trans,octa-cis-undecaprenyl diphosphate + beta-D-GlcNAc-(1-&gt;4)-Mur2Ac(oyl-L-Ala-gamma-D-Glu-L-Lys-D-Ala-D-Ala)-di-trans,octa-cis-undecaprenyl diphosphate = [GlcNAc-(1-&gt;4)-Mur2Ac(oyl-L-Ala-gamma-D-Glu-L-Lys-D-Ala-D-Ala)](n+1)-di-trans,octa-cis-undecaprenyl diphosphate + di-trans,octa-cis-undecaprenyl diphosphate + H(+). It functions in the pathway cell wall biogenesis; peptidoglycan biosynthesis. Peptidoglycan polymerase that catalyzes glycan chain elongation from lipid-linked precursors. This is Biosynthetic peptidoglycan transglycosylase from Chromohalobacter salexigens (strain ATCC BAA-138 / DSM 3043 / CIP 106854 / NCIMB 13768 / 1H11).